A 573-amino-acid polypeptide reads, in one-letter code: 2-succinyl-5-enolpyruvyl-6-hydroxy-3-cyclohexene-1-carboxylate synthase (573 aa).

This sequence belongs to the TPP enzyme family. MenD subfamily. As to quaternary structure, homodimer. It depends on Mg(2+) as a cofactor. Requires Mn(2+) as cofactor. Thiamine diphosphate serves as cofactor.

It catalyses the reaction isochorismate + 2-oxoglutarate + H(+) = 5-enolpyruvoyl-6-hydroxy-2-succinyl-cyclohex-3-ene-1-carboxylate + CO2. Its pathway is quinol/quinone metabolism; 1,4-dihydroxy-2-naphthoate biosynthesis; 1,4-dihydroxy-2-naphthoate from chorismate: step 2/7. The protein operates within quinol/quinone metabolism; menaquinone biosynthesis. Its function is as follows. Catalyzes the thiamine diphosphate-dependent decarboxylation of 2-oxoglutarate and the subsequent addition of the resulting succinic semialdehyde-thiamine pyrophosphate anion to isochorismate to yield 2-succinyl-5-enolpyruvyl-6-hydroxy-3-cyclohexene-1-carboxylate (SEPHCHC). This is 2-succinyl-5-enolpyruvyl-6-hydroxy-3-cyclohexene-1-carboxylate synthase from Shewanella baltica (strain OS185).